A 271-amino-acid polypeptide reads, in one-letter code: 2-amino-3,7-dideoxy-D-threo-hept-6-ulosonate synthase (271 aa).

The Proton acceptor role is filled by Asp-33. 1-deoxy-D-threo-hexo-2,5-diulose 6-phosphate contacts are provided by residues 33-37 (DHGVS) and 153-155 (YPR). Residue Tyr-153 is the Proton donor of the active site. The active-site Schiff-base intermediate with substrate is the Lys-184. 1-deoxy-D-threo-hexo-2,5-diulose 6-phosphate is bound by residues 209–210 (GG) and 236–237 (GR).

Belongs to the DeoC/FbaB aldolase family. ADHS subfamily. Homodecamer.

The enzyme catalyses 1-deoxy-D-threo-hexo-2,5-diulose 6-phosphate + L-aspartate 4-semialdehyde = 2,3-dioxopropyl phosphate + 2-amino-2,3,7-trideoxy-D-lyxo-hept-6-ulosonate. Its function is as follows. Catalyzes a transaldol reaction between 6-deoxy-5-ketofructose 1-phosphate (DKFP) and L-aspartate semialdehyde (ASA) with an elimination of hydroxypyruvaldehyde phosphate to yield 2-amino-3,7-dideoxy-D-threo-hept-6-ulosonate (ADH). Plays a key role in an alternative pathway of the biosynthesis of 3-dehydroquinate (DHQ), which is involved in the canonical pathway for the biosynthesis of aromatic amino acids. The protein is 2-amino-3,7-dideoxy-D-threo-hept-6-ulosonate synthase of Methanococcus aeolicus (strain ATCC BAA-1280 / DSM 17508 / OCM 812 / Nankai-3).